A 194-amino-acid polypeptide reads, in one-letter code: UPF0301 protein FTM_0963 (194 aa).

It belongs to the UPF0301 (AlgH) family.

This chain is UPF0301 protein FTM_0963, found in Francisella tularensis subsp. mediasiatica (strain FSC147).